A 315-amino-acid chain; its full sequence is Serpentine receptor class delta-31 (315 aa).

7 helical membrane-spanning segments follow: residues 6-26 (LHSI…YLAI), 38-58 (AIIT…FFVM), 83-103 (ACYV…IWMI), 124-144 (VFVA…WFSI), 174-194 (ITLI…YIWI), 225-245 (FQVF…SMFT), and 256-276 (AISV…ILFV).

It belongs to the nematode receptor-like protein srd family.

Its subcellular location is the membrane. The sequence is that of Serpentine receptor class delta-31 (srd-31) from Caenorhabditis elegans.